The following is a 119-amino-acid chain: Ribonuclease P protein component (119 aa).

This sequence belongs to the RnpA family. Consists of a catalytic RNA component (M1 or rnpB) and a protein subunit.

The enzyme catalyses Endonucleolytic cleavage of RNA, removing 5'-extranucleotides from tRNA precursor.. In terms of biological role, RNaseP catalyzes the removal of the 5'-leader sequence from pre-tRNA to produce the mature 5'-terminus. It can also cleave other RNA substrates such as 4.5S RNA. The protein component plays an auxiliary but essential role in vivo by binding to the 5'-leader sequence and broadening the substrate specificity of the ribozyme. This Listeria innocua serovar 6a (strain ATCC BAA-680 / CLIP 11262) protein is Ribonuclease P protein component.